The sequence spans 491 residues: MSKVLPKRSDDYSLWYNELVKRADLAENAPVRGCMIIKPYGYSIWEKMQAVLDKMFKETGHSNAYFPLFIPKSYLSKEASHIDGFAKECAVVTHYRLKNDENGKGIIVDPEAKLDEELIVRPTSETVIWNTYKTWIQSHRDLPLLINQWANVVRWEMRTRLFLRTTEFLWQEGHTAHATKQEAIVETEQMMNVYATFAQNFMALPVHRGIKSANERFAGAEETYCIEALMQDGKALQAGTSHFLGQNFAKAFDVKFASKEGSLEYVWGTSWGVSTRLMGALIMAHSDDEGLVLPPLLAPIQVVIVPIFKTAEQLDLIEATLKPILAALKAKDISVKFDHSDKYSPGFKFAEYELKGVPLRVAIGARDIENGTVELARRDTKEKTTVPQEGLADTIEKLLQEIQENIYKKAFAYREANTFVADDYTTFKTMLDETPGFILAHWDGTPETEEKIKEETKATIRCIPLDVTSEPGICMVTGKPSAQRVLFARAY.

It belongs to the class-II aminoacyl-tRNA synthetase family. ProS type 3 subfamily. Homodimer.

The protein localises to the cytoplasm. The catalysed reaction is tRNA(Pro) + L-proline + ATP = L-prolyl-tRNA(Pro) + AMP + diphosphate. Functionally, catalyzes the attachment of proline to tRNA(Pro) in a two-step reaction: proline is first activated by ATP to form Pro-AMP and then transferred to the acceptor end of tRNA(Pro). In Cytophaga hutchinsonii (strain ATCC 33406 / DSM 1761 / CIP 103989 / NBRC 15051 / NCIMB 9469 / D465), this protein is Proline--tRNA ligase.